A 149-amino-acid polypeptide reads, in one-letter code: Transcriptional repressor NrdR (149 aa).

A zinc finger spans residues 3–34 (CPFCSATDTKVIDSRLVADGHQVRRRRECVQC). The ATP-cone domain maps to 49–139 (PRVVKQDGSR…VYRAFEDVSE (91 aa)).

This sequence belongs to the NrdR family. The cofactor is Zn(2+).

Negatively regulates transcription of bacterial ribonucleotide reductase nrd genes and operons by binding to NrdR-boxes. The chain is Transcriptional repressor NrdR from Shewanella piezotolerans (strain WP3 / JCM 13877).